Here is an 809-residue protein sequence, read N- to C-terminus: Phenylalanine--tRNA ligase beta subunit (809 aa).

Residues 39 to 152 (KDKWPNVYVG…ADAPVGMLAS (114 aa)) enclose the tRNA-binding domain. In terms of domain architecture, B5 spans 404-492 (KDRNSVVLSL…RIAGYDTIPC (89 aa)). The Mg(2+) site is built by Asp470, Asp476, Glu479, and Glu480. Residues 717 to 808 (NRFPSVERDL…LNTETGAVLR (92 aa)) form the FDX-ACB domain.

Belongs to the phenylalanyl-tRNA synthetase beta subunit family. Type 1 subfamily. Tetramer of two alpha and two beta subunits. It depends on Mg(2+) as a cofactor.

Its subcellular location is the cytoplasm. It carries out the reaction tRNA(Phe) + L-phenylalanine + ATP = L-phenylalanyl-tRNA(Phe) + AMP + diphosphate + H(+). The sequence is that of Phenylalanine--tRNA ligase beta subunit from Dehalococcoides mccartyi (strain ATCC BAA-2266 / KCTC 15142 / 195) (Dehalococcoides ethenogenes (strain 195)).